Reading from the N-terminus, the 100-residue chain is Putative septation protein SpoVG (100 aa).

This sequence belongs to the SpoVG family.

In terms of biological role, could be involved in septation. The polypeptide is Putative septation protein SpoVG (Clostridium novyi (strain NT)).